Reading from the N-terminus, the 262-residue chain is uncharacterized protein (262 aa).

In terms of domain architecture, S4 RNA-binding spans 6-70 (LRINQFLAHY…LKNKKFSVLV (65 aa)). D108 acts as the Nucleophile in catalysis.

Belongs to the pseudouridine synthase RsuA family.

It carries out the reaction a uridine in RNA = a pseudouridine in RNA. This is an uncharacterized protein from Helicobacter pylori (strain ATCC 700392 / 26695) (Campylobacter pylori).